Consider the following 254-residue polypeptide: Rho-related protein racD (254 aa).

GTP is bound at residue G15–T22. Positions Y37 to F45 match the Effector region motif. Residues D62 to Q66 and T120 to D123 each bind GTP. Residues A186 to P231 show a composition bias toward low complexity. The tract at residues A186–K254 is disordered. Positions A232–K254 are enriched in basic and acidic residues.

Belongs to the small GTPase superfamily. Rho family.

The polypeptide is Rho-related protein racD (racD) (Dictyostelium discoideum (Social amoeba)).